The primary structure comprises 276 residues: F-actin-capping protein subunit alpha (276 aa).

Belongs to the F-actin-capping protein alpha subunit family. In terms of assembly, heterodimer of an alpha and a beta subunit.

The protein resides in the cytoplasm. It is found in the cytoskeleton. Its function is as follows. F-actin-capping proteins bind in a Ca(2+)-independent manner to the fast growing ends of actin filaments (barbed end) thereby blocking the exchange of subunits at these ends. Unlike other capping proteins (such as gelsolin and severin), these proteins do not sever actin filaments. This Aspergillus fumigatus (strain ATCC MYA-4609 / CBS 101355 / FGSC A1100 / Af293) (Neosartorya fumigata) protein is F-actin-capping protein subunit alpha (cap1).